Consider the following 1002-residue polypeptide: Calcium-transporting ATPase sarcoplasmic/endoplasmic reticulum type (1002 aa).

Over 1–48 (MEDGHSKTVEQSLNFFGTDGERGLTLDQIKTNQAKYGPNELPTEEGKS) the chain is Cytoplasmic. Residues 49–69 (IWQLVLEQFDDLLVKILLLAA) form a helical membrane-spanning segment. Topologically, residues 70-89 (IISFVLALFEEHEETFTAFV) are lumenal. Residues 90–110 (EPLVILLILIANAVVGVWQER) form a helical membrane-spanning segment. Residues 111 to 253 (NAESAIEALK…EIKTPLQQKL (143 aa)) are Cytoplasmic-facing. The helical transmembrane segment at 254–273 (DEFGEQLSKVISVICVAVWA) threads the bilayer. At 274 to 295 (INIGHFNDPAHGGSWIKGAIYY) the chain is on the lumenal side. A helical membrane pass occupies residues 296–313 (FKIAVALAVAAIPEGLPA). Residues Val-304, Ala-305, Ile-307, and Glu-309 each coordinate Ca(2+). Residues 314-757 (VITTCLALGT…EEGRAIYNNM (444 aa)) are Cytoplasmic-facing. Residue Asp-351 is the 4-aspartylphosphate intermediate of the active site. Mg(2+)-binding residues include Asp-703 and Asp-707. A helical transmembrane segment spans residues 758–777 (KQFIRYLISSNIGEVVSIFL). Positions 768 and 771 each coordinate Ca(2+). Over 778–787 (TAALGLPEAL) the chain is Lumenal. A helical transmembrane segment spans residues 788–808 (IPVQLLWVNLVTDGLPATALG). Ca(2+) is bound by residues Asn-796, Thr-799, and Asp-800. Residues 809-828 (FNPPDLDIMDKPPRKADEGL) lie on the Cytoplasmic side of the membrane. A helical membrane pass occupies residues 829–851 (ISGWLFFRYMAIGFYVGAATVGA). Residues 852–897 (AAWWFIASSEGPGLTYWQLTHHLSCLGGGDEFKGVDCKIFSDPKAM) lie on the Lumenal side of the membrane. Residues 898–917 (TMALSVLVTIEMLNAMNSLS) traverse the membrane as a helical segment. Glu-908 lines the Ca(2+) pocket. Over 918–930 (ENQSLISMPPWCN) the chain is Cytoplasmic. Residues 931–949 (LWLIGSMALSFTLHFVILY) traverse the membrane as a helical segment. The Lumenal segment spans residues 950-964 (VDVLSTVFQVTPLSA). Residues 965–985 (EEWITVMKFSIPVVLLDETLK) traverse the membrane as a helical segment. The Cytoplasmic segment spans residues 986–1002 (FVARKIADVPDAVVDKW).

It belongs to the cation transport ATPase (P-type) (TC 3.A.3) family.

The protein localises to the endoplasmic reticulum membrane. Its subcellular location is the sarcoplasmic reticulum membrane. The catalysed reaction is Ca(2+)(in) + ATP + H2O = Ca(2+)(out) + ADP + phosphate + H(+). This magnesium-dependent enzyme catalyzes the hydrolysis of ATP coupled with the transport of calcium. This chain is Calcium-transporting ATPase sarcoplasmic/endoplasmic reticulum type, found in Drosophila pseudoobscura pseudoobscura (Fruit fly).